A 142-amino-acid polypeptide reads, in one-letter code: Large ribosomal subunit protein bL17 (142 aa).

The protein belongs to the bacterial ribosomal protein bL17 family. In terms of assembly, part of the 50S ribosomal subunit. Contacts protein L32.

The sequence is that of Large ribosomal subunit protein bL17 from Chlamydia caviae (strain ATCC VR-813 / DSM 19441 / 03DC25 / GPIC) (Chlamydophila caviae).